Here is a 418-residue protein sequence, read N- to C-terminus: Probable serine/threonine-protein kinase DDB_G0280461 (418 aa).

The Protein kinase domain occupies 14–271 (KIEENEFSKG…IVQTLDQLAI (258 aa)). Residues 20 to 28 (FSKGSFAKV) and lysine 41 contribute to the ATP site. Aspartate 139 (proton acceptor) is an active-site residue. Disordered stretches follow at residues 327-356 (NNNNNNNNNNNNKNNINNNNNNNNNNNNNN) and 377-418 (SVNS…CLIN). Residues 377-402 (SVNSSFSNSSLGSNGSNSSGTSTSSG) are compositionally biased toward low complexity. A compositionally biased stretch (basic residues) spans 403–418 (GKKRSQKRKSWKCLIN).

This sequence belongs to the protein kinase superfamily. TKL Ser/Thr protein kinase family.

It catalyses the reaction L-seryl-[protein] + ATP = O-phospho-L-seryl-[protein] + ADP + H(+). It carries out the reaction L-threonyl-[protein] + ATP = O-phospho-L-threonyl-[protein] + ADP + H(+). This Dictyostelium discoideum (Social amoeba) protein is Probable serine/threonine-protein kinase DDB_G0280461.